The sequence spans 458 residues: MASEDKKSKREHIIHFEDTASKSLDEVNGSVEVPHNAGFWKTLAAYTGPGILVAVGYMDPGNWITSIAGGASFKYSLLSVILISSLIAMLLQAMAARLGIVTGRDLAQMTRDHTSKAMGGFLWVITELAIMATDIAEIIGSAIALKLLFNMPLIVGIIITTADVLILLLLMRLGFRKIEAVVATLVLVILLVFAYEVILAQPNVPELLKGYLPHADIVTNKSMLYLSLGIVGATVMPHDLFLGSSISQTRKIDRTKHEEVKKAIKFSTIDSNLQLTMAFIVNSLLLILGAALFFGTSSSVGRFVDLFNALSNSQIVGAIASPMLSMLFAVALLASGQSSTITGTLAGQIIMEGFIHLKMPLWAQRLLTRLMSVTPVLIFAIYYHGNEAKIENLLTFSQVFLSIALPFAVIPLVLYTSDKKIMGEFANRAWVKWTAWFISGVLIILNLYLIAQTLGFVK.

The next 11 membrane-spanning stretches (helical) occupy residues 38 to 58 (GFWK…VGYM), 76 to 96 (SLLS…AMAA), 119 to 139 (GGFL…AEII), 151 to 171 (MPLI…LLLM), 180 to 200 (AVVA…VILA), 223 to 243 (MLYL…LFLG), 275 to 295 (LTMA…LFFG), 315 to 335 (IVGA…LLAS), 370 to 390 (LMSV…EAKI), 393 to 413 (LLTF…IPLV), and 437 to 457 (FISG…LGFV).

Belongs to the NRAMP family.

The protein resides in the cell membrane. In terms of biological role, h(+)-stimulated, divalent metal cation uptake system. The sequence is that of Divalent metal cation transporter MntH from Lacticaseibacillus paracasei (strain ATCC 334 / BCRC 17002 / CCUG 31169 / CIP 107868 / KCTC 3260 / NRRL B-441) (Lactobacillus paracasei).